Reading from the N-terminus, the 543-residue chain is CTP synthase (543 aa).

Residues Met1–Leu267 form an amidoligase domain region. Ser15 contributes to the CTP binding site. Ser15 provides a ligand contact to UTP. ATP-binding positions include Ser16–Ile21 and Asp73. 2 residues coordinate Mg(2+): Asp73 and Glu141. CTP is bound by residues Asp148 to Glu150, Lys188 to Gln193, and Lys224. UTP contacts are provided by residues Lys188–Gln193 and Lys224. Residues Lys292–Asn543 enclose the Glutamine amidotransferase type-1 domain. An L-glutamine-binding site is contributed by Gly354. Cys381 functions as the Nucleophile; for glutamine hydrolysis in the catalytic mechanism. L-glutamine is bound by residues Leu382–Gln385, Glu405, and Arg473. Catalysis depends on residues His516 and Glu518.

It belongs to the CTP synthase family. Homotetramer.

The enzyme catalyses UTP + L-glutamine + ATP + H2O = CTP + L-glutamate + ADP + phosphate + 2 H(+). The catalysed reaction is L-glutamine + H2O = L-glutamate + NH4(+). It catalyses the reaction UTP + NH4(+) + ATP = CTP + ADP + phosphate + 2 H(+). It functions in the pathway pyrimidine metabolism; CTP biosynthesis via de novo pathway; CTP from UDP: step 2/2. Its activity is regulated as follows. Allosterically activated by GTP, when glutamine is the substrate; GTP has no effect on the reaction when ammonia is the substrate. The allosteric effector GTP functions by stabilizing the protein conformation that binds the tetrahedral intermediate(s) formed during glutamine hydrolysis. Inhibited by the product CTP, via allosteric rather than competitive inhibition. Functionally, catalyzes the ATP-dependent amination of UTP to CTP with either L-glutamine or ammonia as the source of nitrogen. Regulates intracellular CTP levels through interactions with the four ribonucleotide triphosphates. The polypeptide is CTP synthase (Campylobacter jejuni subsp. doylei (strain ATCC BAA-1458 / RM4099 / 269.97)).